The primary structure comprises 49 residues: Large ribosomal subunit protein bL33 (49 aa).

It belongs to the bacterial ribosomal protein bL33 family.

This Fervidobacterium nodosum (strain ATCC 35602 / DSM 5306 / Rt17-B1) protein is Large ribosomal subunit protein bL33.